A 144-amino-acid polypeptide reads, in one-letter code: Thyrostimulin alpha-2 subunit (144 aa).

The signal sequence occupies residues 1 to 41; that stretch reads MGRRDSGRAVAQRYRGVTRGVTVIACLMVVCACVGLCDATG. 4 disulfide bridges follow: C52-C107, C66-C121, C76-C136, and C80-C138.

Belongs to the glycoprotein hormones subunit alpha family. In terms of assembly, heterodimer with GPHB5; non-covalently-linked. Expressed by the venom duct.

It is found in the secreted. This is Thyrostimulin alpha-2 subunit from Conus victoriae (Queen Victoria cone).